A 354-amino-acid chain; its full sequence is uncharacterized protein (354 aa).

A helical membrane pass occupies residues 43 to 63 (LIAVTLWSCVGSLLFICLLAV).

The protein resides in the cell membrane. This is an uncharacterized protein from Bacillus subtilis (strain 168).